Consider the following 196-residue polypeptide: ATP-dependent Clp protease proteolytic subunit (196 aa).

Residue serine 99 is the Nucleophile of the active site. Histidine 124 is a catalytic residue.

It belongs to the peptidase S14 family. As to quaternary structure, fourteen ClpP subunits assemble into 2 heptameric rings which stack back to back to give a disk-like structure with a central cavity, resembling the structure of eukaryotic proteasomes.

The protein localises to the cytoplasm. It carries out the reaction Hydrolysis of proteins to small peptides in the presence of ATP and magnesium. alpha-casein is the usual test substrate. In the absence of ATP, only oligopeptides shorter than five residues are hydrolyzed (such as succinyl-Leu-Tyr-|-NHMec, and Leu-Tyr-Leu-|-Tyr-Trp, in which cleavage of the -Tyr-|-Leu- and -Tyr-|-Trp bonds also occurs).. Functionally, cleaves peptides in various proteins in a process that requires ATP hydrolysis. Has a chymotrypsin-like activity. Plays a major role in the degradation of misfolded proteins. This is ATP-dependent Clp protease proteolytic subunit from Campylobacter lari (strain RM2100 / D67 / ATCC BAA-1060).